The sequence spans 172 residues: Myosin regulatory light chain 2, smooth muscle major isoform (172 aa).

The segment covering 1–16 has biased composition (basic residues); it reads MSSKRAKAKTTKKRPQ. Positions 1–20 are disordered; it reads MSSKRAKAKTTKKRPQRATS. Serine 2 carries the post-translational modification N-acetylserine. EF-hand domains follow at residues 29–64, 98–133, and 134–169; these read SQIQEFKEAFNMIDQNRDGFIDKEDLHDMLASMGKN, DPEDVIRNAFACFDEEASGFIHEDHLRELLTTMGDR, and FTDEEVDEMYREAPIDKKGNFNYVEFTRILKHGAKD. 4 residues coordinate Ca(2+): aspartate 42, asparagine 44, aspartate 46, and aspartate 53.

As to quaternary structure, myosin is a hexamer of 2 heavy chains and 4 light chains.

Functionally, myosin regulatory subunit that plays an important role in regulation of both smooth muscle and nonmuscle cell contractile activity. Implicated in cytokinesis, receptor capping, and cell locomotion. In Gallus gallus (Chicken), this protein is Myosin regulatory light chain 2, smooth muscle major isoform.